A 239-amino-acid chain; its full sequence is 2-C-methyl-D-erythritol 4-phosphate cytidylyltransferase (239 aa).

This sequence belongs to the IspD/TarI cytidylyltransferase family. IspD subfamily.

It carries out the reaction 2-C-methyl-D-erythritol 4-phosphate + CTP + H(+) = 4-CDP-2-C-methyl-D-erythritol + diphosphate. Its pathway is isoprenoid biosynthesis; isopentenyl diphosphate biosynthesis via DXP pathway; isopentenyl diphosphate from 1-deoxy-D-xylulose 5-phosphate: step 2/6. Catalyzes the formation of 4-diphosphocytidyl-2-C-methyl-D-erythritol from CTP and 2-C-methyl-D-erythritol 4-phosphate (MEP). This is 2-C-methyl-D-erythritol 4-phosphate cytidylyltransferase from Acidobacterium capsulatum (strain ATCC 51196 / DSM 11244 / BCRC 80197 / JCM 7670 / NBRC 15755 / NCIMB 13165 / 161).